A 200-amino-acid polypeptide reads, in one-letter code: GTP cyclohydrolase-2 (200 aa).

R50–E54 contributes to the GTP binding site. C55, C66, and C68 together coordinate Zn(2+). GTP is bound by residues Q71, E93–R95, and T115. D127 (proton acceptor) is an active-site residue. The active-site Nucleophile is the R129. 2 residues coordinate GTP: T150 and K155.

The protein belongs to the GTP cyclohydrolase II family. Zn(2+) serves as cofactor.

The enzyme catalyses GTP + 4 H2O = 2,5-diamino-6-hydroxy-4-(5-phosphoribosylamino)-pyrimidine + formate + 2 phosphate + 3 H(+). The protein operates within cofactor biosynthesis; riboflavin biosynthesis; 5-amino-6-(D-ribitylamino)uracil from GTP: step 1/4. Functionally, catalyzes the conversion of GTP to 2,5-diamino-6-ribosylamino-4(3H)-pyrimidinone 5'-phosphate (DARP), formate and pyrophosphate. The protein is GTP cyclohydrolase-2 of Acinetobacter baylyi (strain ATCC 33305 / BD413 / ADP1).